Consider the following 263-residue polypeptide: Receptor-transporting protein 1 (263 aa).

The Cytoplasmic segment spans residues 1-238 (MRIFRPWRLR…ETGSGWNFCS (238 aa)). The 3CxxC-type zinc-finger motif lies at 88–197 (ASGRFHCSWC…GEFCEACQEG (110 aa)). Residues 239 to 259 (IPWCLFWATVLLLIIYLQLSF) traverse the membrane as a helical segment. Residues 260–263 (RSSV) are Extracellular-facing.

Belongs to the TMEM7 family. Interacts with olfactory receptors.

It is found in the cell membrane. Functionally, specifically promotes functional cell surface expression of olfactory receptors, but not of other GPCRs. The chain is Receptor-transporting protein 1 (RTP1) from Macaca fascicularis (Crab-eating macaque).